Here is a 283-residue protein sequence, read N- to C-terminus: 1-deoxypentalenic acid 11-beta-hydroxylase (283 aa).

Arg-117 contributes to the substrate binding site. 2 residues coordinate Fe cation: His-135 and Asp-137. 2-oxoglutarate is bound by residues His-135 to Asp-137 and Trp-151. Arg-186 provides a ligand contact to substrate. His-224 lines the Fe cation pocket. 2-oxoglutarate-binding residues include Ser-226 and Arg-238. A disordered region spans residues His-251–Glu-283.

Belongs to the PhyH family. The cofactor is Fe cation. It depends on L-ascorbate as a cofactor.

It catalyses the reaction 1-deoxypentalenate + 2-oxoglutarate + O2 = 1-deoxy-11beta-hydroxypentalenate + succinate + CO2. It participates in antibiotic biosynthesis; pentalenolactone biosynthesis. In terms of biological role, catalyzes the conversion of 1-deoxypentalenic acid to 11-beta-hydroxy-1-deoxypentalenic acid in the biosynthesis of pentalenolactone antibiotic. This is 1-deoxypentalenic acid 11-beta-hydroxylase (pntH) from Streptomyces arenae.